We begin with the raw amino-acid sequence, 256 residues long: NAD-dependent protein deacetylase (256 aa).

The region spanning 1–254 is the Deacetylase sirtuin-type domain; it reads MDISYHEKIS…KDILDVIKSE (254 aa). 8 residues coordinate NAD(+): Ala28, Thr32, Phe39, Arg40, Gln105, Ile107, Asp108, and His123. Residue Phe39 participates in nicotinamide binding. Positions 107 and 108 each coordinate nicotinamide. His123 acts as the Proton acceptor in catalysis. Zn(2+)-binding residues include Cys131, Cys134, Cys156, and Cys159. The NAD(+) site is built by Thr197, Ser198, and Asn222.

The protein belongs to the sirtuin family. Class U subfamily. It depends on Zn(2+) as a cofactor.

The protein localises to the cytoplasm. It catalyses the reaction N(6)-acetyl-L-lysyl-[protein] + NAD(+) + H2O = 2''-O-acetyl-ADP-D-ribose + nicotinamide + L-lysyl-[protein]. In terms of biological role, NAD-dependent protein deacetylase which modulates the activities of several enzymes which are inactive in their acetylated form. In Thermodesulfovibrio yellowstonii (strain ATCC 51303 / DSM 11347 / YP87), this protein is NAD-dependent protein deacetylase.